We begin with the raw amino-acid sequence, 372 residues long: NAD(P)H-quinone oxidoreductase subunit 1 (372 aa).

8 consecutive transmembrane segments (helical) span residues Pro31–Leu51, Pro65–Leu85, Leu97–Leu117, Val128–Met148, Leu176–Val196, Phe254–Tyr276, Leu304–Leu324, and Phe347–Pro367.

It belongs to the complex I subunit 1 family. NDH-1 is composed of at least 11 different subunits.

The protein localises to the cellular thylakoid membrane. It catalyses the reaction a plastoquinone + NADH + (n+1) H(+)(in) = a plastoquinol + NAD(+) + n H(+)(out). It carries out the reaction a plastoquinone + NADPH + (n+1) H(+)(in) = a plastoquinol + NADP(+) + n H(+)(out). NDH-1 shuttles electrons from an unknown electron donor, via FMN and iron-sulfur (Fe-S) centers, to quinones in the respiratory and/or the photosynthetic chain. The immediate electron acceptor for the enzyme in this species is believed to be plastoquinone. Couples the redox reaction to proton translocation, and thus conserves the redox energy in a proton gradient. In Leptolyngbya boryana (Plectonema boryanum), this protein is NAD(P)H-quinone oxidoreductase subunit 1.